The following is a 372-amino-acid chain: Mitogen-activated protein kinase kinase kinase 17 (372 aa).

Positions 3 to 259 constitute a Protein kinase domain; that stretch reads WTRGRILGRG…ATQLLNHPFL (257 aa). Residues 9 to 17 and K32 each bind ATP; that span reads LGRGSTATV. D126 acts as the Proton acceptor in catalysis. The residue at position 312 (S312) is a Phosphoserine.

This sequence belongs to the protein kinase superfamily. Ser/Thr protein kinase family. As to quaternary structure, binds to MKK3.

Its subcellular location is the nucleus. The catalysed reaction is L-seryl-[protein] + ATP = O-phospho-L-seryl-[protein] + ADP + H(+). It carries out the reaction L-threonyl-[protein] + ATP = O-phospho-L-threonyl-[protein] + ADP + H(+). Its function is as follows. Component of the abscisic acid (ABA) signaling pathway that may act as ABA signal transducer in the context of abiotic stresses. Triggers MPK7 activation in a MKK3-dependent manner. Mediates the ABA-dependent activation of the MKK3-MPK7 module. The protein is Mitogen-activated protein kinase kinase kinase 17 of Arabidopsis thaliana (Mouse-ear cress).